Reading from the N-terminus, the 2410-residue chain is Coprinoferrin synthetase (2410 aa).

The interval 237 to 646 is adenylation 1; it reads LERRAKTNPH…GRIDTQIKVR (410 aa). The region spanning 783–860 is the Carrier 1 domain; that stretch reads RDCTPLEAEV…DIAQLVHVST (78 aa). Position 820 is an O-(pantetheine 4'-phosphoryl)serine (Ser-820). The tract at residues 891 to 1260 is condensation 1; sequence DILPPFPVQE…SVEAVVNVHD (370 aa). Residues 1298 to 1317 are disordered; the sequence is ELPLPSRRSPEPVRKVNDDE. Basic and acidic residues predominate over residues 1305-1314; it reads RSPEPVRKVN. In terms of domain architecture, Carrier 2 spans 1324–1400; the sequence is LLDPVVVADL…RLARVVSNNK (77 aa). Residue Ser-1361 is modified to O-(pantetheine 4'-phosphoryl)serine. Residues 1436 to 1839 form a condensation 2 region; the sequence is IIPSTALQSG…RIGRTFSVPS (404 aa). The Carrier 3 domain occupies 1858-1932; it reads VQAGIIHPVL…DLVLQATEIK (75 aa). Ser-1893 bears the O-(pantetheine 4'-phosphoryl)serine mark. The interval 1992–2315 is condensation 3; it reads FQYLFTFKLP…TPIFNVNVNV (324 aa).

It belongs to the NRP synthetase family.

It functions in the pathway siderophore biosynthesis. In terms of biological role, nonribosomal peptide synthase; part of the gene cluster that mediates the biosynthesis of coprinoferrin, an acylated tripeptide hydroxamate siderophore. The biosynthesis of coprinoferrin depends on the hydroxylation of ornithine to N(5)-hydroxyornithine, catalyzed by the monooxygenase cpf2. The second step, the acylation of N(5)-hydroxy-L-ornithine to yield N(5)-hexanoyl-N(5)-hydroxyl-L-ornithine is catalyzed by a not yet identified acyltransferase. Finally, assembly of coprinoferrin is catalyzed by the nonribosomal peptide synthase (NRPS) cpf1 via amide bond formation between three N(5)-hexanoyl-N(5)-hydroxyl-L-ornithine molecules to release the linear trimer. Interestingly, proteins seemingly not directly related to biosynthesis, such as transcription factors, replication factors, and autophagy-related proteins, are conserved among the clusters homologous to the coprinoferrin cluster, suggesting that the cluster may also play developmental and cell biological functions. This chain is Coprinoferrin synthetase, found in Coprinopsis cinerea (strain Okayama-7 / 130 / ATCC MYA-4618 / FGSC 9003) (Inky cap fungus).